Here is a 954-residue protein sequence, read N- to C-terminus: Translation initiation factor IF-2 (954 aa).

Positions 56 to 75 are enriched in low complexity; it reads KAAAPAAPKAPAPAAESRPA. The segment at 56–355 is disordered; the sequence is KAAAPAAPKA…GVSVPRGDGN (300 aa). The segment covering 76-87 has biased composition (pro residues); that stretch reads APAPGPAAPKAP. Low complexity-rich tracts occupy residues 88-125 and 138-151; these read APKV…KPGA and PRQG…SAPR. The span at 241 to 254 shows a compositional bias: pro residues; that stretch reads PGAPRPGGPRPTPG. A compositionally biased stretch (gly residues) spans 269–322; that stretch reads GRPGGGGRGPGRPGAPGTGGPGGGGGAPAGGGFGKGGRGRGGTQGAFGKGGAGR. The span at 323 to 332 shows a compositional bias: basic residues; sequence GKQRKSKRAK. In terms of domain architecture, tr-type G spans 447-618; it reads PRAPVVTVMG…AVLLTADAAL (172 aa). The G1 stretch occupies residues 456–463; it reads GHVDHGKT. Position 456-463 (456-463) interacts with GTP; sequence GHVDHGKT. Residues 481–485 are G2; sequence GITQH. Residues 506 to 509 form a G3 region; sequence DTPG. GTP is bound by residues 506-510 and 560-563; these read DTPGH and NKID. A G4 region spans residues 560 to 563; the sequence is NKID. The segment at 596 to 598 is G5; the sequence is SAR.

It belongs to the TRAFAC class translation factor GTPase superfamily. Classic translation factor GTPase family. IF-2 subfamily.

The protein localises to the cytoplasm. In terms of biological role, one of the essential components for the initiation of protein synthesis. Protects formylmethionyl-tRNA from spontaneous hydrolysis and promotes its binding to the 30S ribosomal subunits. Also involved in the hydrolysis of GTP during the formation of the 70S ribosomal complex. The polypeptide is Translation initiation factor IF-2 (Pseudarthrobacter chlorophenolicus (strain ATCC 700700 / DSM 12829 / CIP 107037 / JCM 12360 / KCTC 9906 / NCIMB 13794 / A6) (Arthrobacter chlorophenolicus)).